Reading from the N-terminus, the 535-residue chain is Sodium channel protein Nach (535 aa).

Over 1–49 the chain is Cytoplasmic; that stretch reads MGHQEELKPEQVDLKVTPFVGYLRRTWSDFCATSSIHGLKYTRDEDTNK. Residues 50–70 traverse the membrane as a helical segment; the sequence is IVHLVWLLISVVMFICAVVMA. Residues 71–471 lie on the Extracellular side of the membrane; sequence RTFYMDYRSS…LVSNLGSAFS (401 aa). N-linked (GlcNAc...) asparagine glycosylation is found at asparagine 165, asparagine 239, and asparagine 367. The chain crosses the membrane as a helical span at residues 472 to 492; it reads LFVGMSMLSVVEIIYYFSVIL. At 493 to 535 the chain is on the cytoplasmic side; the sequence is RKNYKLECETRSQMLHKKPKFAWPKANDTHSKEQKSVFIIHKS.

This sequence belongs to the amiloride-sensitive sodium channel (TC 1.A.6) family. As to expression, embryonic and larval tracheal system; dorsal trunk (but not at fusion with transverse connective), several branches and terminal cells. Also expressed in adult tracheal system; dorsal trunk, but not at the spiracles.

It localises to the membrane. In terms of biological role, part of a complex that plays a role in tracheal liquid clearance. Probable role in sodium transport. The protein is Sodium channel protein Nach (Nach) of Drosophila melanogaster (Fruit fly).